The following is a 368-amino-acid chain: E3 ubiquitin-protein ligase ATL31 (368 aa).

Positions 1–23 (MDPIKHISLPVLVLFLLLSVSAG) are cleaved as a signal peptide. The helical transmembrane segment at 46-66 (AVVVVVVIAALFFMGFFTVYI) threads the bilayer. The RING-type; atypical zinc finger occupies 124–166 (CAICLNEFEDDETLRLLPKCDHVFHPHCIGAWLQGHVTCPVCR). Residue serine 247 is modified to Phosphoserine. Residues 342–368 (NKDGEGTSSVQHIGTVGSTSGSLRLPV) form a disordered region. The span at 347–368 (GTSSVQHIGTVGSTSGSLRLPV) shows a compositional bias: polar residues.

It belongs to the RING-type zinc finger family. ATL subfamily.

Its subcellular location is the membrane. It catalyses the reaction S-ubiquitinyl-[E2 ubiquitin-conjugating enzyme]-L-cysteine + [acceptor protein]-L-lysine = [E2 ubiquitin-conjugating enzyme]-L-cysteine + N(6)-ubiquitinyl-[acceptor protein]-L-lysine.. It functions in the pathway protein modification; protein ubiquitination. Functionally, E3 ubiquitin-protein ligase that is required for the plant C/N response during seedling growth transition. May be involved in the early steps of the plant defense signaling pathway. This is E3 ubiquitin-protein ligase ATL31 (ATL31) from Arabidopsis thaliana (Mouse-ear cress).